The chain runs to 829 residues: Transmembrane protease serine 7 (829 aa).

The Cytoplasmic portion of the chain corresponds to 1–62 (MDKEKSDPSC…RAPFWNVQNK (62 aa)). Positions 26–52 (SVPGKLPGRRPPRKPIGKPRPRKQPKK) are disordered. The segment covering 32–52 (PGRRPPRKPIGKPRPRKQPKK) has biased composition (basic residues). A helical; Signal-anchor for type II membrane protein transmembrane segment spans residues 63–83 (IILFTVFLFILAVTAWTLLWL). Residues 84-829 (YISKTESKDA…WIHKYVPSLL (746 aa)) lie on the Extracellular side of the membrane. Residues 92–220 (DAFYFVGMFR…DSVVLNAGLR (129 aa)) form the SEA domain. Disulfide bonds link C233–C259, C285–C308, and C351–C382. CUB domains lie at 233-346 (CSRY…FEVI) and 351-467 (CEST…YNIS). N-linked (GlcNAc...) asparagine glycans are attached at residues N401 and N465. 3 LDL-receptor class A domains span residues 469–505 (PCPA…LFCV), 503–540 (FCVT…QNCT), and 544–581 (PCTS…EGCG). 9 disulfide bridges follow: C470-C482, C477-C495, C489-C504, C511-C530, C524-C539, C545-C557, C552-C571, C565-C580, and C617-C633. The 235-residue stretch at 592–826 (IVGGSDSQEG…FVPWIHKYVP (235 aa)) folds into the Peptidase S1 domain. Catalysis depends on charge relay system residues H632 and D680. 3 cysteine pairs are disulfide-bonded: C716–C782, C748–C761, and C772–C802. S776 functions as the Charge relay system in the catalytic mechanism.

Belongs to the peptidase S1 family. Forms a heterodimer with SERPINA5. Post-translationally, N-glycosylated. Expressed in brain, eye, testis, skin, epididymis and salivary gland with lower levels in heart, skeletal muscle, thymus, ovary, prostate and uterus.

The protein localises to the cell membrane. Functionally, serine protease which preferentially hydrolyzes peptides with Arg at the P1 position. This chain is Transmembrane protease serine 7 (Tmprss7), found in Mus musculus (Mouse).